Consider the following 93-residue polypeptide: uncharacterized protein (93 aa).

3 consecutive transmembrane segments (helical) span residues 9-29 (ITVIGYIAGTLTTFASLPQLI), 40-60 (ISLAFVITFTTGLTLWLIYGI), and 66-86 (PIIVFNILSLMFWIPITYLKI).

Its subcellular location is the cell membrane. This is an uncharacterized protein from Methanocaldococcus jannaschii (strain ATCC 43067 / DSM 2661 / JAL-1 / JCM 10045 / NBRC 100440) (Methanococcus jannaschii).